A 141-amino-acid chain; its full sequence is General odorant-binding protein 57b (141 aa).

An N-terminal signal peptide occupies residues 1–22 (MFIYRLVFIAPLILLLFSLAKA). 3 disulfides stabilise this stretch: Cys39/Cys77, Cys73/Cys120, and Cys111/Cys129.

This sequence belongs to the PBP/GOBP family.

Present in the aqueous fluid surrounding olfactory sensory dendrites and are thought to aid in the capture and transport of hydrophobic odorants into and through this fluid. The sequence is that of General odorant-binding protein 57b from Drosophila melanogaster (Fruit fly).